Consider the following 489-residue polypeptide: Betaine aldehyde dehydrogenase (489 aa).

Residues Thr-26 and Asp-93 each contribute to the K(+) site. 150-152 (GAW) contacts NAD(+). Lys-162 (charge relay system) is an active-site residue. 176-179 (KPSE) is an NAD(+) binding site. Ile-180 lines the K(+) pocket. NAD(+) is bound at residue 229–232 (GVET). Leu-245 serves as a coordination point for K(+). Glu-251 functions as the Proton acceptor in the catalytic mechanism. Residues Gly-253, Cys-285, and Glu-386 each coordinate NAD(+). Catalysis depends on Cys-285, which acts as the Nucleophile. Cys-285 is subject to Cysteine sulfenic acid (-SOH). K(+) is bound by residues Lys-456 and Gly-459. Glu-463 functions as the Charge relay system in the catalytic mechanism.

Belongs to the aldehyde dehydrogenase family. As to quaternary structure, dimer of dimers. K(+) serves as cofactor.

The enzyme catalyses betaine aldehyde + NAD(+) + H2O = glycine betaine + NADH + 2 H(+). The protein operates within amine and polyamine biosynthesis; betaine biosynthesis via choline pathway; betaine from betaine aldehyde: step 1/1. Its function is as follows. Involved in the biosynthesis of the osmoprotectant glycine betaine. Catalyzes the irreversible oxidation of betaine aldehyde to the corresponding acid. The polypeptide is Betaine aldehyde dehydrogenase (Paraburkholderia xenovorans (strain LB400)).